Reading from the N-terminus, the 466-residue chain is Integrin-linked protein kinase homolog pat-4 (466 aa).

ANK repeat units lie at residues 50–79 (HAFSLLHWAAKGGHVAIAEMLLSRGARVNS), 83–112 (GDDTSLHLAAAHGHRQIVVKLLSRKADVNA), and 116–145 (HGMTPLHYACFWGYEQIAEDLISCGAAVNV). A Protein kinase domain is found at 210 to 465 (LNLITKIAES…QIIPILERMI (256 aa)).

Belongs to the protein kinase superfamily. TKL Ser/Thr protein kinase family. As to quaternary structure, interacts (via protein kinase domain) with unc-112 (via N-terminus). Interacts (via ANK repeats) with unc-97 (via first LIM domain). Interacts (via protein kinase domain) with pat-6 (via C-terminus CH domain). May form a complex with unc-112, unc-97 and pat-6. Does not interact with integrin pat-3. Component of an integrin containing attachment complex, composed of at least pat-2, pat-3, pat-4, pat-6, unc-52, unc-97 and unc-112. In terms of tissue distribution, expressed in body wall muscle.

It localises to the cytoplasm. The protein localises to the myofibril. The protein resides in the sarcomere. It is found in the m line. Its subcellular location is the basal cell membrane. Functionally, probable pseudokinase that acts as an adapter protein. Component of an integrin containing attachment complex, which is required for muscle development and maintenance. Involved in the assembly of dense bodies and M lines during body wall muscle development by recruiting several of their components including integrin pat-3, cpna-1, unc-89 and unc-112 to integrin-mediated attachment sites. Plays a role in distal tip cell (DTC) migration and in oocyte development probably by regulating the actin cytoskeleton. During the formation of neuromuscular junctions at the larval stage, negatively regulates membrane protrusion from body wall muscles. May be involved in thermotolerance and lifespan. The protein is Integrin-linked protein kinase homolog pat-4 of Caenorhabditis elegans.